The sequence spans 339 residues: tRNA dimethylallyltransferase (339 aa).

An ATP-binding site is contributed by 33–40 (GPTASGKT). 35–40 (TASGKT) lines the substrate pocket. 2 interaction with substrate tRNA regions span residues 58-61 (DSLL) and 182-186 (QRIQR).

This sequence belongs to the IPP transferase family. In terms of assembly, monomer. The cofactor is Mg(2+).

It catalyses the reaction adenosine(37) in tRNA + dimethylallyl diphosphate = N(6)-dimethylallyladenosine(37) in tRNA + diphosphate. Functionally, catalyzes the transfer of a dimethylallyl group onto the adenine at position 37 in tRNAs that read codons beginning with uridine, leading to the formation of N6-(dimethylallyl)adenosine (i(6)A). In Acidithiobacillus ferrooxidans (strain ATCC 23270 / DSM 14882 / CIP 104768 / NCIMB 8455) (Ferrobacillus ferrooxidans (strain ATCC 23270)), this protein is tRNA dimethylallyltransferase.